The following is a 129-amino-acid chain: Ig kappa chain V-IV region S107B (129 aa).

The first 22 residues, 1-22, serve as a signal peptide directing secretion; the sequence is MDLQVQIIXFLLISVTVIMSRG. Residues 23–45 form a framework-1 region; it reads ENVLTQSPAIMAASLGQKVTMTC. An intrachain disulfide couples C45 to C111. The interval 46–57 is complementarity-determining-1; the sequence is SASSSVSSSYLH. Positions 58–72 are framework-2; the sequence is WYQQKSGASPKPLIH. The tract at residues 73–79 is complementarity-determining-2; sequence RTSNLAS. Residues 80–111 form a framework-3 region; sequence GVPARFSGSGSGTSYSLTISSVEAEDDATYYC. Residues 112–118 form a complementarity-determining-3 region; it reads QQWSGYP. Residues 119–128 form a framework-4 region; that stretch reads FGSGTKLEIK.

The chain is Ig kappa chain V-IV region S107B from Mus musculus (Mouse).